The sequence spans 808 residues: Homeobox-leucine zipper protein HDG1 (808 aa).

The disordered stretch occupies residues 57-121 (LQTNGEMSRN…KRYHRHTPKQ (65 aa)). The segment covering 79–90 (SRGEDVESRSES) has biased composition (basic and acidic residues). A compositionally biased stretch (basic residues) spans 108–119 (LKKKKRYHRHTP). Residues 110–169 (KKKRYHRHTPKQIQDLESVFKECAHPDEKQRLDLSRRLNLDPRQVKFWFQNRRTQMKTQI) constitute a DNA-binding region (homeobox). The stretch at 158 to 233 (FQNRRTQMKT…SRLKDELDRV (76 aa)) forms a coiled coil. The START domain maps to 310–541 (DFDQRSRYLD…LQRQCECLTI (232 aa)).

This sequence belongs to the HD-ZIP homeobox family. Class IV subfamily. In terms of assembly, interacts with CFL1. Binds with BBM. As to expression, expressed in trichomes forming at the base of young leaves, in endodermal cell lines around emergent lateral roots and in the epidermal layer of the stamen filament.

It localises to the nucleus. Functionally, probable transcription factor. Promotes cuticle development probably by modulating the expression of the downstream genes BDG and FDH, possibly repressed in a CFL1-dependent manner. Involved, together with PDF2, in the regulation of flower organs development by promoting the expression of APETALA 3 (AP3) in the epidermis and internal cell layers of developing flowers. In opposition to BBM, seems to promote cell differentiation and giant cell identity via transcriptional repression of meristem and cell proliferation genes. This Arabidopsis thaliana (Mouse-ear cress) protein is Homeobox-leucine zipper protein HDG1.